The sequence spans 378 residues: Zinc transporter 7 (378 aa).

Over 1-37 the chain is Cytoplasmic; sequence MLPLSIKDDEYKPPKFNLFGKISGWFRSILSDKTSRN. The chain crosses the membrane as a helical span at residues 38-58; it reads LFFFLCLNLSFAFVELLYGIW. The Lumenal segment spans residues 59 to 67; that stretch reads SNCLGLISD. The chain crosses the membrane as a helical span at residues 68–88; it reads SFHMFFDSTAILAGLAASVIS. The Cytoplasmic segment spans residues 89 to 102; sequence KWRDNDAFSYGYVR. Residues 103 to 123 form a helical membrane-spanning segment; that stretch reads AEVLAGFVNGLFLIFTAFFIF. The Lumenal portion of the chain corresponds to 124 to 140; the sequence is SEGVERALAPPDVHHER. Residues 141 to 161 form a helical membrane-spanning segment; it reads LLLVSILGFVVNLVGIFVFNH. The interval 161–220 is his-rich loop; that stretch reads HGGHGHSHGSGHGHSHSLFNGALDHSHGHEDHCHSHEAKHGAAHSHDHDHAHGHGHLHSH. Over 162–238 the chain is Cytoplasmic; it reads GGHGHSHGSG…AGPSRQILQG (77 aa). Over residues 186–223 the composition is skewed to basic and acidic residues; that stretch reads SHGHEDHCHSHEAKHGAAHSHDHDHAHGHGHLHSHDGP. The segment at 186 to 224 is disordered; sequence SHGHEDHCHSHEAKHGAAHSHDHDHAHGHGHLHSHDGPS. A helical transmembrane segment spans residues 239–259; sequence VFLHILADTLGSIGVIASAIM. The Lumenal segment spans residues 260 to 264; that stretch reads MQNFG. Residues 265 to 285 traverse the membrane as a helical segment; sequence LMIADPICSILIAILIVVSVI. The Cytoplasmic segment spans residues 286 to 378; it reads PLLRESVGIL…LYVQIDFAAM (93 aa).

Belongs to the cation diffusion facilitator (CDF) transporter (TC 2.A.4) family. SLC30A subfamily. In terms of assembly, homooligomer. In terms of tissue distribution, highly expressed in liver, spleen, duodenum and part of the jejunum of small intestine (at protein level). Moderately expressed in kidney, lung, and brain. Barely detectable in heart. In brain, expressed in cerebellum, cerebral cortex and hippocampus (at protein level).

It is found in the golgi apparatus membrane. The protein resides in the cytoplasmic vesicle. It localises to the golgi apparatus. The protein localises to the trans-Golgi network. Its subcellular location is the sarcoplasmic reticulum. It is found in the mitochondrion. It carries out the reaction Zn(2+)(in) = Zn(2+)(out). In terms of biological role, zinc ion transporter mediating zinc entry from the cytosol into the lumen of organelles along the secretory pathway. By contributing to zinc ion homeostasis within the early secretory pathway, regulates the activation and folding of enzymes like alkaline phosphatases. The polypeptide is Zinc transporter 7 (Mus musculus (Mouse)).